Here is a 394-residue protein sequence, read N- to C-terminus: MVTMEELREMDCSVLKRLMNRDENGGGAGGSGSHGTLGLPSGGKCLLLDCRPFLAHSAGYILGSVNVRCNTIVRRRAKGSVSLEQILPAEEEVRARLRSGLYSAVIVYDERSPRAESLREDSTVSLVVQALRRNAERTDICLLKGGYERFSSEYPEFCSKTKALAAIPPPVPPSATEPLDLGCSSCGTPLHDQGGPVEILPFLYLGSAYHAARRDMLDALGITALLNVSSDCPNHFEGHYQYKCIPVEDNHKADISSWFMEAIEYIDAVKDCRGRVLVHCQAGISRSATICLAYLMMKKRVRLEEAFEFVKQRRSIISPNFSFMGQLLQFESQVLATSCAAEAASPSGPLRERGKTPATPTSQFVFSFPVSVGVHSAPSSLPYLHSPITTSPSC.

Val2 carries the N-acetylvaline modification. The 119-residue stretch at 41–159 (SGGKCLLLDC…FSSEYPEFCS (119 aa)) folds into the Rhodanese domain. Positions 195-336 (GPVEILPFLY…LLQFESQVLA (142 aa)) constitute a Tyrosine-protein phosphatase domain. The active-site Phosphocysteine intermediate is Cys280. Phosphoserine; by MAPK is present on residues Ser386 and Ser391.

It belongs to the protein-tyrosine phosphatase family. Non-receptor class dual specificity subfamily. Hollow spherical complex composed of 24 subunits with pseudooctahedral symmetry, has a tetramer as the basic unit. Post-translationally, phosphorylation in the C-terminus by ERK1/2 inhibits proteasomal degradation and stabilizes the protein.

The protein localises to the nucleus. It carries out the reaction O-phospho-L-tyrosyl-[protein] + H2O = L-tyrosyl-[protein] + phosphate. It catalyses the reaction O-phospho-L-seryl-[protein] + H2O = L-seryl-[protein] + phosphate. The enzyme catalyses O-phospho-L-threonyl-[protein] + H2O = L-threonyl-[protein] + phosphate. Regulates mitogenic signal transduction by dephosphorylating both Thr and Tyr residues on MAP kinases ERK1 and ERK2. In Homo sapiens (Human), this protein is Dual specificity protein phosphatase 4 (DUSP4).